A 347-amino-acid chain; its full sequence is Dihydroorotase (347 aa).

Residues His-17 and His-19 each contribute to the Zn(2+) site. Substrate-binding positions include 19–21 (HLR) and Asn-45. The Zn(2+) site is built by Lys-103, His-140, and His-178. The residue at position 103 (Lys-103) is an N6-carboxylysine. His-140 lines the substrate pocket. Leu-223 provides a ligand contact to substrate. Asp-251 is a binding site for Zn(2+). Residue Asp-251 is part of the active site. Positions 255 and 267 each coordinate substrate.

It belongs to the metallo-dependent hydrolases superfamily. DHOase family. Class II DHOase subfamily. Homodimer. The cofactor is Zn(2+).

It catalyses the reaction (S)-dihydroorotate + H2O = N-carbamoyl-L-aspartate + H(+). It participates in pyrimidine metabolism; UMP biosynthesis via de novo pathway; (S)-dihydroorotate from bicarbonate: step 3/3. Its function is as follows. Catalyzes the reversible cyclization of carbamoyl aspartate to dihydroorotate. This chain is Dihydroorotase, found in Pectobacterium atrosepticum (strain SCRI 1043 / ATCC BAA-672) (Erwinia carotovora subsp. atroseptica).